The primary structure comprises 261 residues: Cytochrome c oxidase subunit 3 (261 aa).

The Mitochondrial matrix segment spans residues methionine 1–proline 15. A helical membrane pass occupies residues tryptophan 16–tryptophan 34. Residues phenylalanine 35–threonine 40 lie on the Mitochondrial intermembrane side of the membrane. Residues isoleucine 41 to threonine 66 traverse the membrane as a helical segment. Residues phenylalanine 67–threonine 72 lie on the Mitochondrial matrix side of the membrane. Residues proline 73–serine 105 traverse the membrane as a helical segment. Residues leucine 106–glutamate 128 lie on the Mitochondrial intermembrane side of the membrane. Residues valine 129–methionine 152 traverse the membrane as a helical segment. Topologically, residues glutamate 153–asparagine 155 are mitochondrial matrix. The helical transmembrane segment at arginine 156 to glutamate 183 threads the bilayer. The Mitochondrial intermembrane portion of the chain corresponds to alanine 184–aspartate 190. Residues glycine 191–leucine 223 traverse the membrane as a helical segment. The Mitochondrial matrix segment spans residues lysine 224–histidine 232. Residues phenylalanine 233–isoleucine 256 traverse the membrane as a helical segment. Over tyrosine 257–serine 261 the chain is Mitochondrial intermembrane.

This sequence belongs to the cytochrome c oxidase subunit 3 family. As to quaternary structure, component of the cytochrome c oxidase (complex IV, CIV), a multisubunit enzyme composed of 14 subunits. The complex is composed of a catalytic core of 3 subunits MT-CO1, MT-CO2 and MT-CO3, encoded in the mitochondrial DNA, and 11 supernumerary subunits COX4I, COX5A, COX5B, COX6A, COX6B, COX6C, COX7A, COX7B, COX7C, COX8 and NDUFA4, which are encoded in the nuclear genome. The complex exists as a monomer or a dimer and forms supercomplexes (SCs) in the inner mitochondrial membrane with NADH-ubiquinone oxidoreductase (complex I, CI) and ubiquinol-cytochrome c oxidoreductase (cytochrome b-c1 complex, complex III, CIII), resulting in different assemblies (supercomplex SCI(1)III(2)IV(1) and megacomplex MCI(2)III(2)IV(2)).

The protein localises to the mitochondrion inner membrane. It carries out the reaction 4 Fe(II)-[cytochrome c] + O2 + 8 H(+)(in) = 4 Fe(III)-[cytochrome c] + 2 H2O + 4 H(+)(out). Its function is as follows. Component of the cytochrome c oxidase, the last enzyme in the mitochondrial electron transport chain which drives oxidative phosphorylation. The respiratory chain contains 3 multisubunit complexes succinate dehydrogenase (complex II, CII), ubiquinol-cytochrome c oxidoreductase (cytochrome b-c1 complex, complex III, CIII) and cytochrome c oxidase (complex IV, CIV), that cooperate to transfer electrons derived from NADH and succinate to molecular oxygen, creating an electrochemical gradient over the inner membrane that drives transmembrane transport and the ATP synthase. Cytochrome c oxidase is the component of the respiratory chain that catalyzes the reduction of oxygen to water. Electrons originating from reduced cytochrome c in the intermembrane space (IMS) are transferred via the dinuclear copper A center (CU(A)) of subunit 2 and heme A of subunit 1 to the active site in subunit 1, a binuclear center (BNC) formed by heme A3 and copper B (CU(B)). The BNC reduces molecular oxygen to 2 water molecules using 4 electrons from cytochrome c in the IMS and 4 protons from the mitochondrial matrix. The chain is Cytochrome c oxidase subunit 3 (MT-CO3) from Aepyceros melampus (Impala).